Reading from the N-terminus, the 954-residue chain is E3 ubiquitin-protein ligase arkadia (954 aa).

The segment covering 50 to 66 has biased composition (polar residues); the sequence is LCSDTNKQQRDLNSNGT. Disordered regions lie at residues 50 to 175 and 193 to 276; these read LCSD…VSSL and RKRF…SGGM. Low complexity-rich tracts occupy residues 112-131 and 232-251; these read SSFS…GDSD and SSSS…SSST. Positions 280–284 match the SUMO interaction motif 1 (SIM) motif; sequence VVVIE. An SUMO interaction motif 2 (SIM) motif is present at residues 305-311; the sequence is EVEIVTV. Disordered regions lie at residues 318-346, 364-452, and 485-509; these read RTTL…RNRV, TVDE…MPRL, and HFPH…SFRD. Residues 328-337 show a composition bias toward polar residues; the sequence is WGQNTQSGRT. The SUMO interaction motif 3 (SIM) motif lies at 360–364; it reads VVDLT. The segment covering 385-395 has biased composition (low complexity); sequence VSTVSSNTSTS. A compositionally biased stretch (basic residues) spans 485 to 496; the sequence is HFPHHHHHHHQS. A ubiquitin binding region spans residues 867 to 869; the sequence is YPH. Zn(2+) is bound by residues cysteine 902 and cysteine 905. An RING-type; atypical zinc finger spans residues 902–943; it reads CTICLSILEEGEDVRRLPCMHLFHQVCVDQWLITNKKCPICR. The ubiquitin binding stretch occupies residues 917 to 921; sequence RLPCM. Histidine 925 and cysteine 928 together coordinate Zn(2+).

It belongs to the Arkadia family. Monomer.

The protein resides in the nucleus. It localises to the cytoplasm. Its subcellular location is the PML body. It catalyses the reaction S-ubiquitinyl-[E2 ubiquitin-conjugating enzyme]-L-cysteine + [acceptor protein]-L-lysine = [E2 ubiquitin-conjugating enzyme]-L-cysteine + N(6)-ubiquitinyl-[acceptor protein]-L-lysine.. Its pathway is protein modification; protein ubiquitination. Binds free ubiquitin non-covalently via its RING-type zinc finger. Ubiquitin-binding leads to enhance the E3 ubiquitin-protein ligase activity by stabilizing the ubiquitin-conjugating enzyme E2 (donor ubiquitin) in the 'closed' conformation and activating ubiquitin transfer. In terms of biological role, E3 ubiquitin-protein ligase required for mesoderm patterning during embryonic development. Acts as an enhancer of the transcriptional responses of the smad2/smad3 effectors, which are activated downstream of BMP. Acts by mediating ubiquitination and degradation of SMAD inhibitors such as smad7, inducing their proteasomal degradation and thereby enhancing the transcriptional activity of TGF-beta and BMP. Specifically binds polysumoylated chains via SUMO interaction motifs (SIMs) and mediates ubiquitination of sumoylated substrates. The regulation of the BMP-SMAD signaling is however independent of sumoylation and is not dependent of SUMO interaction motifs (SIMs). The polypeptide is E3 ubiquitin-protein ligase arkadia (rnf111) (Xenopus tropicalis (Western clawed frog)).